The primary structure comprises 292 residues: Probable xyloglucan endotransglucosylase/hydrolase protein 6 (292 aa).

An N-terminal signal peptide occupies residues 1 to 30 (MAKIYSPSFPGTLCLCIFTLLTLMFIRVSA). Residues 31-224 (RPATFVEDFK…WSKAPFYAYY (194 aa)) form the GH16 domain. The active-site Nucleophile is the Glu110. Glu114 serves as the catalytic Proton donor. Glu114 serves as a coordination point for xyloglucan. Asn118 carries an N-linked (GlcNAc...) asparagine glycan. Residues 127 to 129 (QTN), 137 to 139 (DRE), 203 to 204 (DW), and Gly208 contribute to the xyloglucan site. Cystine bridges form between Cys232-Cys240 and Cys277-Cys290. Arg282 lines the xyloglucan pocket.

It belongs to the glycosyl hydrolase 16 family. XTH group 1 subfamily. Contains at least one intrachain disulfide bond essential for its enzymatic activity.

The protein localises to the secreted. It is found in the cell wall. It localises to the extracellular space. The protein resides in the apoplast. The enzyme catalyses breaks a beta-(1-&gt;4) bond in the backbone of a xyloglucan and transfers the xyloglucanyl segment on to O-4 of the non-reducing terminal glucose residue of an acceptor, which can be a xyloglucan or an oligosaccharide of xyloglucan.. In terms of biological role, catalyzes xyloglucan endohydrolysis (XEH) and/or endotransglycosylation (XET). Cleaves and religates xyloglucan polymers, an essential constituent of the primary cell wall, and thereby participates in cell wall construction of growing tissues. This is Probable xyloglucan endotransglucosylase/hydrolase protein 6 (XTH6) from Arabidopsis thaliana (Mouse-ear cress).